We begin with the raw amino-acid sequence, 327 residues long: ATPase GET3 (327 aa).

Residue 27-34 (KGGVGKTT) participates in ATP binding. Aspartate 56 is a catalytic residue. ATP-binding residues include glutamate 231 and asparagine 258. Zn(2+)-binding residues include cysteine 269 and cysteine 272.

It belongs to the arsA ATPase family. In terms of assembly, homodimer. Component of the Golgi to ER traffic (GET) complex, which is composed of GET1, GET2 and GET3. Within the complex, GET1 and GET2 form a heterotetramer which is stabilized by phosphatidylinositol binding and which binds to the GET3 homodimer. Interacts with the chloride channel protein GEF1.

It is found in the cytoplasm. The protein localises to the endoplasmic reticulum. Its subcellular location is the golgi apparatus. In terms of biological role, ATPase required for the post-translational delivery of tail-anchored (TA) proteins to the endoplasmic reticulum. Recognizes and selectively binds the transmembrane domain of TA proteins in the cytosol. This complex then targets to the endoplasmic reticulum by membrane-bound receptors GET1 and GET2, where the tail-anchored protein is released for insertion. This process is regulated by ATP binding and hydrolysis. ATP binding drives the homodimer towards the closed dimer state, facilitating recognition of newly synthesized TA membrane proteins. ATP hydrolysis is required for insertion. Subsequently, the homodimer reverts towards the open dimer state, lowering its affinity for the GET1-GET2 receptor, and returning it to the cytosol to initiate a new round of targeting. Cooperates with the HDEL receptor ERD2 to mediate the ATP-dependent retrieval of resident ER proteins that contain a C-terminal H-D-E-L retention signal from the Golgi to the ER. Involved in low-level resistance to the oxyanions arsenite and arsenate, and in heat tolerance. The protein is ATPase GET3 of Yarrowia lipolytica (strain CLIB 122 / E 150) (Yeast).